Here is a 177-residue protein sequence, read N- to C-terminus: Large ribosomal subunit protein uL5 (177 aa).

This sequence belongs to the universal ribosomal protein uL5 family. In terms of assembly, part of the 50S ribosomal subunit; part of the 5S rRNA/L5/L18/L25 subcomplex. Contacts the 5S rRNA and the P site tRNA. Forms a bridge to the 30S subunit in the 70S ribosome.

In terms of biological role, this is one of the proteins that bind and probably mediate the attachment of the 5S RNA into the large ribosomal subunit, where it forms part of the central protuberance. In the 70S ribosome it contacts protein S13 of the 30S subunit (bridge B1b), connecting the 2 subunits; this bridge is implicated in subunit movement. Contacts the P site tRNA; the 5S rRNA and some of its associated proteins might help stabilize positioning of ribosome-bound tRNAs. This chain is Large ribosomal subunit protein uL5, found in Anaplasma phagocytophilum (strain HZ).